A 751-amino-acid polypeptide reads, in one-letter code: Proton-associated sugar transporter A (751 aa).

Transmembrane regions (helical) follow at residues 93 to 113 (ILFG…PVLL), 123 to 143 (SLVW…LGAW), 155 to 175 (RPFI…LLNG), 191 to 211 (WGIL…DSAD), 233 to 253 (IHAL…GIHW), and 268 to 288 (VIYV…LISI). The residue at position 500 (Thr500) is a Phosphothreonine. 6 helical membrane-spanning segments follow: residues 536 to 556 (GWLS…EVVF), 576 to 596 (VTMG…YSAI), 606 to 626 (VRTL…LATL), 630 to 650 (LYVV…LCTL), 688 to 708 (FLAQ…VGSA), and 710 to 730 (GVMY…SLCV).

It belongs to the glycoside-pentoside-hexuronide (GPH) cation symporter transporter (TC 2.A.2) family.

Its subcellular location is the membrane. It catalyses the reaction D-galactose(in) + H(+)(in) = D-galactose(out) + H(+)(out). The catalysed reaction is D-glucose(out) + H(+)(out) = D-glucose(in) + H(+)(in). Functionally, proton-associated glucose transporter in the brain. This Mus musculus (Mouse) protein is Proton-associated sugar transporter A.